The chain runs to 238 residues: Probable transcriptional regulatory protein VPA0011 (238 aa).

It belongs to the TACO1 family.

The protein resides in the cytoplasm. This chain is Probable transcriptional regulatory protein VPA0011, found in Vibrio parahaemolyticus serotype O3:K6 (strain RIMD 2210633).